The chain runs to 780 residues: Aconitate hydratase, mitochondrial (780 aa).

A mitochondrion-targeting transit peptide spans 1 to 27 (MAPYSLLVSRLQKALGARQYHVASVLC). The residue at position 31 (K31) is an N6-succinyllysine. Position 50 is an N6-acetyllysine; alternate (K50). K50 is modified (N6-succinyllysine; alternate). Q99 lines the substrate pocket. Residues K138 and K144 each carry the N6-acetyllysine; alternate modification. K138 and K144 each carry N6-succinyllysine; alternate. A substrate-binding site is contributed by 192–194 (DSH). At K233 the chain carries N6-acetyllysine; alternate. N6-succinyllysine; alternate is present on K233. C385 is a [4Fe-4S] cluster binding site. At K411 the chain carries N6-succinyllysine. [4Fe-4S] cluster is bound by residues C448 and C451. 2 residues coordinate substrate: R474 and R479. N6-acetyllysine; alternate is present on residues K517 and K523. 2 positions are modified to N6-succinyllysine; alternate: K517 and K523. The segment covering 524–537 (LEAPDADELPRAEF) has biased composition (basic and acidic residues). Residues 524–560 (LEAPDADELPRAEFDPGQDTYQHPPKDSSGQQVDVSP) form a disordered region. K549 carries the post-translational modification N6-succinyllysine. Residues 551–560 (SSGQQVDVSP) show a composition bias toward polar residues. S559 carries the post-translational modification Phosphoserine. K573 carries the N6-acetyllysine; alternate modification. N6-succinyllysine; alternate is present on K573. An N6-succinyllysine modification is found at K591. The residue at position 605 (K605) is an N6-acetyllysine; alternate. K605 is modified (N6-succinyllysine; alternate). Position 607 (R607) interacts with substrate. An N6-succinyllysine modification is found at K628. Position 670 is a phosphoserine (S670). 670–671 (SR) is a substrate binding site. Position 689 is an N6-succinyllysine (K689). An N6-acetyllysine; alternate mark is found at K723 and K730. N6-succinyllysine; alternate occurs at positions 723 and 730. Residues K736 and K743 each carry the N6-acetyllysine modification.

The protein belongs to the aconitase/IPM isomerase family. In terms of assembly, monomer. [4Fe-4S] cluster serves as cofactor. Forms covalent cross-links mediated by transglutaminase TGM2, between a glutamine and the epsilon-amino group of a lysine residue, forming homopolymers and heteropolymers.

It localises to the mitochondrion. It carries out the reaction citrate = D-threo-isocitrate. The protein operates within carbohydrate metabolism; tricarboxylic acid cycle; isocitrate from oxaloacetate: step 2/2. Its function is as follows. Catalyzes the isomerization of citrate to isocitrate via cis-aconitate. The protein is Aconitate hydratase, mitochondrial (ACO2) of Bos taurus (Bovine).